Here is a 574-residue protein sequence, read N- to C-terminus: Thiol:disulfide interchange protein DsbD (574 aa).

An N-terminal signal peptide occupies residues 1–19; the sequence is MAHRILTLILLFCSAHASA. A disulfide bridge links cysteine 122 with cysteine 128. The tract at residues 147-169 is disordered; that stretch reads VKANAATPSAATGEQTRVNSDSP. Over residues 152–169 the composition is skewed to polar residues; that stretch reads ATPSAATGEQTRVNSDSP. Transmembrane regions (helical) follow at residues 173-193, 218-238, 253-273, 306-326, 333-353, 367-387, and 399-419; these read LPFS…TPCV, LLAF…GLVV, WVLV…FGLF, IAGL…LLYI, WLGG…LILV, WMEQ…VFLL, and LWSV…LNAT. The cysteines at positions 192 and 314 are disulfide-linked. The 145-residue stretch at 430–574 folds into the Thioredoxin domain; the sequence is LLGAAMICAR…FATHLHNRLR (145 aa). An intrachain disulfide couples cysteine 489 to cysteine 492.

This sequence belongs to the thioredoxin family. DsbD subfamily.

It is found in the cell inner membrane. The enzyme catalyses [protein]-dithiol + NAD(+) = [protein]-disulfide + NADH + H(+). It catalyses the reaction [protein]-dithiol + NADP(+) = [protein]-disulfide + NADPH + H(+). Its function is as follows. Required to facilitate the formation of correct disulfide bonds in some periplasmic proteins and for the assembly of the periplasmic c-type cytochromes. Acts by transferring electrons from cytoplasmic thioredoxin to the periplasm. This transfer involves a cascade of disulfide bond formation and reduction steps. This chain is Thiol:disulfide interchange protein DsbD, found in Cronobacter sakazakii (strain ATCC BAA-894) (Enterobacter sakazakii).